The following is a 142-amino-acid chain: Nucleoside diphosphate kinase (142 aa).

The ATP site is built by K9, F57, R85, T91, R102, and N112. A disordered region spans residues 87-106 (AMGATDPAKSEKGTVRGDLG). The active-site Pros-phosphohistidine intermediate is H115.

The protein belongs to the NDK family. In terms of assembly, homotetramer. Mg(2+) serves as cofactor.

It localises to the cytoplasm. It carries out the reaction a 2'-deoxyribonucleoside 5'-diphosphate + ATP = a 2'-deoxyribonucleoside 5'-triphosphate + ADP. The enzyme catalyses a ribonucleoside 5'-diphosphate + ATP = a ribonucleoside 5'-triphosphate + ADP. Functionally, major role in the synthesis of nucleoside triphosphates other than ATP. The ATP gamma phosphate is transferred to the NDP beta phosphate via a ping-pong mechanism, using a phosphorylated active-site intermediate. The sequence is that of Nucleoside diphosphate kinase from Dehalococcoides mccartyi (strain ATCC BAA-2266 / KCTC 15142 / 195) (Dehalococcoides ethenogenes (strain 195)).